The chain runs to 133 residues: Fluoride-specific ion channel FluC (133 aa).

The next 4 helical transmembrane spans lie at 3-23, 41-61, 76-96, and 103-123; these read AVVW…GSGL, WGTL…LIWV, IVGL…CLVF, and LIVG…VFLG. Positions 81 and 84 each coordinate Na(+).

The protein belongs to the fluoride channel Fluc/FEX (TC 1.A.43) family.

It localises to the cell inner membrane. The enzyme catalyses fluoride(in) = fluoride(out). Its activity is regulated as follows. Na(+) is not transported, but it plays an essential structural role and its presence is essential for fluoride channel function. In terms of biological role, fluoride-specific ion channel. Important for reducing fluoride concentration in the cell, thus reducing its toxicity. This is Fluoride-specific ion channel FluC from Xylella fastidiosa (strain M23).